The primary structure comprises 482 residues: tRNA(Ile)-lysidine synthase (482 aa).

An ATP-binding site is contributed by 28–33 (SGGPDS).

The protein belongs to the tRNA(Ile)-lysidine synthase family.

It is found in the cytoplasm. The catalysed reaction is cytidine(34) in tRNA(Ile2) + L-lysine + ATP = lysidine(34) in tRNA(Ile2) + AMP + diphosphate + H(+). Its function is as follows. Ligates lysine onto the cytidine present at position 34 of the AUA codon-specific tRNA(Ile) that contains the anticodon CAU, in an ATP-dependent manner. Cytidine is converted to lysidine, thus changing the amino acid specificity of the tRNA from methionine to isoleucine. The polypeptide is tRNA(Ile)-lysidine synthase (Symbiobacterium thermophilum (strain DSM 24528 / JCM 14929 / IAM 14863 / T)).